The sequence spans 125 residues: Basic leucine zipper transcriptional factor ATF-like (125 aa).

Over residues 1 to 14 (MPHSSDSSDSSFSR) the composition is skewed to low complexity. The segment at 1–58 (MPHSSDSSDSSFSRSPPPGKQDSSDDVRKVQRREKNRIAAQKSRQRQTQKADTLHLES) is disordered. The bZIP domain maps to 26-89 (DVRKVQRREK…KYFTSVLSSH (64 aa)). The tract at residues 28 to 50 (RKVQRREKNRIAAQKSRQRQTQK) is basic motif. Residue Ser43 is modified to Phosphoserine. Thr48 is modified (phosphothreonine). Positions 54-75 (LHLESEDLEKQNAALRKEIKQL) are leucine-zipper.

The protein belongs to the bZIP family. In terms of assembly, heterodimer; mainly heterodimerizes with JUNB. The BATF-JUNB heterodimer interacts with IRF4 and IRF8. Interacts (via bZIP domain) with IRF4 and IRF8; the interaction is direct. Also forms heterodimers with JUN and JUND. Interacts with IFI35. Post-translationally, phosphorylated on serine and threonine residues and at least one tyrosine residue. Phosphorylation at Ser-43 inhibit DNA binding activity and transforms it as a negative regulator of AP-1 mediated transcription.

It localises to the nucleus. Its subcellular location is the cytoplasm. AP-1 family transcription factor that controls the differentiation of lineage-specific cells in the immune system: specifically mediates the differentiation of T-helper 17 cells (Th17), follicular T-helper cells (TfH), CD8(+) dendritic cells and class-switch recombination (CSR) in B-cells. Acts via the formation of a heterodimer with JUNB that recognizes and binds DNA sequence 5'-TGA[CG]TCA-3'. The BATF-JUNB heterodimer also forms a complex with IRF4 (or IRF8) in immune cells, leading to recognition of AICE sequence (5'-TGAnTCA/GAAA-3'), an immune-specific regulatory element, followed by cooperative binding of BATF and IRF4 (or IRF8) and activation of genes. Controls differentiation of T-helper cells producing interleukin-17 (Th17 cells) by binding to Th17-associated gene promoters: regulates expression of the transcription factor RORC itself and RORC target genes such as IL17 (IL17A or IL17B). Also involved in differentiation of follicular T-helper cells (TfH) by directing expression of BCL6 and MAF. In B-cells, involved in class-switch recombination (CSR) by controlling the expression of both AICDA and of germline transcripts of the intervening heavy-chain region and constant heavy-chain region (I(H)-C(H)). Following infection, can participate in CD8(+) dendritic cell differentiation via interaction with IRF4 and IRF8 to mediate cooperative gene activation. Regulates effector CD8(+) T-cell differentiation by regulating expression of SIRT1. Following DNA damage, part of a differentiation checkpoint that limits self-renewal of hematopoietic stem cells (HSCs): up-regulated by STAT3, leading to differentiation of HSCs, thereby restricting self-renewal of HSCs. The protein is Basic leucine zipper transcriptional factor ATF-like (BATF) of Bos taurus (Bovine).